The following is a 336-amino-acid chain: Potassium channel subfamily K member 1 (336 aa).

Over 1–20 (MLQSLAGSSCVRLVERHRSA) the chain is Cytoplasmic. A helical transmembrane segment spans residues 21-41 (WCFGFLVLGYLLYLVFGAVVF). The Extracellular portion of the chain corresponds to 42 to 103 (SSVELPYEDL…SNASGNWNWD (62 aa)). Residue Asn-95 is glycosylated (N-linked (GlcNAc...) asparagine). Residues 104-116 (FTSALFFASTVLS) constitute an intramembrane region (helical). Residues 117-122 (TTGYGH) lie within the membrane without spanning it. Residues 117–122 (TTGYGH) are selectivity filter 1. Topologically, residues 123–132 (TVPLSDGGKA) are extracellular. A helical membrane pass occupies residues 133–156 (FCIIYSVIGIPFTLLFLTAVVQRI). At 157–181 (TVHVTRRPVLYFHIRWGFSKQVVAI) the chain is on the cytoplasmic side. Residues 182–202 (VHAVLLGFVTVSCFFFIPAAV) traverse the membrane as a helical segment. At 203–211 (FSVLEDDWN) the chain is on the extracellular side. The segment at residues 212 to 224 (FLESFYFCFISLS) is an intramembrane region (helical). The interval 225 to 230 (TIGLGD) is selectivity filter 2. Residues 225-231 (TIGLGDY) lie within the membrane without spanning it. Over 232–243 (VPGEGYNQKFRE) the chain is Extracellular. The chain crosses the membrane as a helical span at residues 244–267 (LYKIGITCYLLLGLIAMLVVLETF). At 268–336 (CELHELKKFR…SACVDGPANH (69 aa)) the chain is on the cytoplasmic side. Lys-274 participates in a covalent cross-link: Glycyl lysine isopeptide (Lys-Gly) (interchain with G-Cter in SUMO). The segment at 293-299 (IIEHDQL) is important for intracellular retention in recycling endosomes. Ser-326 carries the phosphoserine modification.

The protein belongs to the two pore domain potassium channel (TC 1.A.1.8) family. In terms of assembly, homodimer; disulfide-linked. Heterodimer with KCNK2; disulfide-linked. In astrocytes, forms mostly heterodimeric potassium channels with KCNK2, with only a minor proportion of functional channels containing homodimeric KCNK1. Interacts with KCNK3 and KCNK9, forming functional heterodimeric channels. Interacts with GNG4. Identified in a complex with PSD and ARF6; interacts only with PSD that is bound to ARF6. Interacts with UBE2I. In terms of processing, sumoylation is controversial. Sumoylated by UBE2I. Not sumoylated when expressed in xenopus oocytes or mammalian cells. Sumoylation inactivates the channel, but does not interfere with expression at the cell membrane. Sumoylation of a single subunit is sufficient to silence the dimeric channel. Sumoylation of KCNK1 is sufficient to silence heterodimeric channels formed by KCNK1 and KCNK3 or KCNK9. Desumoylated by SENP1; this activates the channel. Desumoylated by SENP1; this strongly increases halothane-mediated activation of heterodimeric channels formed with KCNK9. SENP1 treatment has no effect. In terms of tissue distribution, detected in bronchial epithelial cells. Detected in heart left atrium and left ventricle. Detected in cardiac myocytes (at protein level). Widely expressed with high levels in heart, brain and kidney, and lower levels in colon, ovary, placenta, lung and liver. Highly expressed in cerebellum, and detected at lower levels in amygdala, caudate nucleus, brain cortex, hippocampus, putamen, substantia nigra, thalamus, dorsal root ganglion, spinal cord, pituitary, heart, kidney, lung, placenta, pancreas, stomach, small intestine, uterus and prostate. Detected in right and left heart ventricle and atrium, and in heart Purkinje fibers.

The protein localises to the cell membrane. Its subcellular location is the recycling endosome. It localises to the synaptic cell membrane. It is found in the cytoplasmic vesicle. The protein resides in the perikaryon. The protein localises to the cell projection. Its subcellular location is the dendrite. It localises to the apical cell membrane. The catalysed reaction is K(+)(in) = K(+)(out). It carries out the reaction NH4(+)(in) = NH4(+)(out). It catalyses the reaction Na(+)(in) = Na(+)(out). The enzyme catalyses Rb(+)(in) = Rb(+)(out). The catalysed reaction is Cs(+)(in) = Cs(+)(out). It carries out the reaction Li(+)(in) = Li(+)(out). It catalyses the reaction L-glutamate(out) = L-glutamate(in). The enzyme catalyses chloride(in) = chloride(out). With respect to regulation, inhibited by Ba(2+) ions and quinidine. Inhibited by quinine. Is slightly inhibited by 10 mM tetraethylammonium (TEA), and only marginally inhibited by 4-aminopyridine, charybdotoxin and dendrotoxin. Lowering the extracellular pH to below 6.5 transiently activates the channel, and then inhibits channel activity. Inhibited when the intracellular pH is decreased down to pH 6.0, but this may be due to indirect effects. In terms of biological role, ion channel that contributes to passive transmembrane potassium transport and to the regulation of the resting membrane potential in brain astrocytes, but also in kidney and in other tissues. Forms dimeric channels through which potassium ions pass in accordance with their electrochemical gradient. The channel is selective for K(+) ions at physiological potassium concentrations and at neutral pH, but becomes permeable to Na(+) at subphysiological K(+) levels and upon acidification of the extracellular medium. The homodimer has very low potassium channel activity, when expressed in heterologous systems, and can function as weakly inward rectifying potassium channel. Channel activity is modulated by activation of serotonin receptors. Heterodimeric channels containing KCNK1 and KCNK2 have much higher activity, and may represent the predominant form in astrocytes. Heterodimeric channels containing KCNK1 and KCNK3 or KCNK9 have much higher activity. Heterodimeric channels formed by KCNK1 and KCNK9 may contribute to halothane-sensitive currents. Mediates outward rectifying potassium currents in dentate gyrus granule cells and contributes to the regulation of their resting membrane potential. Contributes to the regulation of action potential firing in dentate gyrus granule cells and down-regulates their intrinsic excitability. In astrocytes, the heterodimer formed by KCNK1 and KCNK2 is required for rapid glutamate release in response to activation of G-protein coupled receptors, such as F2R and CNR1. Required for normal ion and water transport in the kidney. Contributes to the regulation of the resting membrane potential of pancreatic beta cells. The low channel activity of homodimeric KCNK1 may be due to sumoylation. The low channel activity may be due to rapid internalization from the cell membrane and retention in recycling endosomes. Permeable to monovalent cations with ion selectivity for K(+) &gt; Rb(+) &gt;&gt; NH4(+) &gt;&gt; Cs(+) = Na(+) = Li(+). The polypeptide is Potassium channel subfamily K member 1 (KCNK1) (Homo sapiens (Human)).